An 840-amino-acid polypeptide reads, in one-letter code: Aconitase AMT8 (840 aa).

258–260 (DSH) lines the substrate pocket. Cys-450, Cys-513, and Cys-516 together coordinate [4Fe-4S] cluster. Substrate-binding positions include Arg-536, Arg-541, and 709-710 (SR).

The protein belongs to the aconitase/IPM isomerase family.

Its pathway is mycotoxin biosynthesis. Aconitase; part of the gene clusters that mediate the biosynthesis of AM-toxins, host-selective toxins (HSTs) causing Alternaria blotch on apple, a worldwide distributed disease. AM-toxins are cyclic depsipeptides containing the 3 residues 2-hydroxy-isovaleric acid (2-HIV), dehydroalanine, L-alanine which are common for all 3 AM-toxins I to III. The fourth precursor is L-alpha-amino-methoxyphenyl-valeric acid (L-Amv) for AM-toxin I, L-alpha-amino-phenyl-valeric acid (L-Apv) for AM-toxin II, and L-alpha-amino-hydroxyphenyl-valeric acid (L-Ahv) for AM-toxin III. AM-toxins have two target sites for affecting susceptible apple cells; they cause invagination of the plasma membrane and electrolyte loss and chloroplast disorganization. The non-ribosomal peptide synthetase AMT1 contains 4 catalytic modules and is responsible for activation of each residue in AM-toxin. The aldo-keto reductase AMT2 catalyzes the conversion of 2-keto-isovaleric acid (2-KIV) to 2-hydroxy-isovaleric acid (2-HIV), one of the precursor residues incorporated by AMT1 during AM-toxin biosynthesis, by reduction of its ketone to an alcohol. The cytochrome P450 monooxygenase AMT3 and the thioesterase AMT4 are also important for AM-toxin production, but their exact function within the AM-toxin biosynthesis are not known yet. Up to 21 proteins (including AMT1 to AMT4) are predicted to be involved in AM-toxin biosynthesis since their expression ishighly up-regulated in AM-toxin-producing cultures. The sequence is that of Aconitase AMT8 from Alternaria alternata (Alternaria rot fungus).